The chain runs to 172 residues: NADH-quinone oxidoreductase subunit B (172 aa).

C46, C47, C111, and C141 together coordinate [4Fe-4S] cluster.

It belongs to the complex I 20 kDa subunit family. As to quaternary structure, NDH-1 is composed of 14 different subunits. Subunits NuoB, C, D, E, F, and G constitute the peripheral sector of the complex. The cofactor is [4Fe-4S] cluster.

Its subcellular location is the cell membrane. It catalyses the reaction a quinone + NADH + 5 H(+)(in) = a quinol + NAD(+) + 4 H(+)(out). Functionally, NDH-1 shuttles electrons from NADH, via FMN and iron-sulfur (Fe-S) centers, to quinones in the respiratory chain. The immediate electron acceptor for the enzyme in this species is believed to be a menaquinone. Couples the redox reaction to proton translocation (for every two electrons transferred, four hydrogen ions are translocated across the cytoplasmic membrane), and thus conserves the redox energy in a proton gradient. This chain is NADH-quinone oxidoreductase subunit B, found in Brevibacillus brevis (strain 47 / JCM 6285 / NBRC 100599).